Reading from the N-terminus, the 174-residue chain is UPF0340 protein SH0921 (174 aa).

Belongs to the UPF0340 family.

The polypeptide is UPF0340 protein SH0921 (Staphylococcus haemolyticus (strain JCSC1435)).